Reading from the N-terminus, the 192-residue chain is Protein GrpE (192 aa).

Residues 1–34 (MSSKEQKTPNEQVSEEMENAAEQQVEATQETGEG) are disordered. A compositionally biased stretch (polar residues) spans 21–31 (AEQQVEATQET).

The protein belongs to the GrpE family. As to quaternary structure, homodimer.

Its subcellular location is the cytoplasm. In terms of biological role, participates actively in the response to hyperosmotic and heat shock by preventing the aggregation of stress-denatured proteins, in association with DnaK and GrpE. It is the nucleotide exchange factor for DnaK and may function as a thermosensor. Unfolded proteins bind initially to DnaJ; upon interaction with the DnaJ-bound protein, DnaK hydrolyzes its bound ATP, resulting in the formation of a stable complex. GrpE releases ADP from DnaK; ATP binding to DnaK triggers the release of the substrate protein, thus completing the reaction cycle. Several rounds of ATP-dependent interactions between DnaJ, DnaK and GrpE are required for fully efficient folding. This is Protein GrpE from Yersinia enterocolitica serotype O:8 / biotype 1B (strain NCTC 13174 / 8081).